Here is a 233-residue protein sequence, read N- to C-terminus: C-type lectin domain-containing protein 87 (233 aa).

An N-terminal signal peptide occupies residues 1 to 20 (MRFFRFLVFPVIAGLSSVLA). N26 carries N-linked (GlcNAc...) asparagine glycosylation. Residue S32 is glycosylated (O-linked (Xyl...) (chondroitin sulfate) serine). The N-linked (GlcNAc...) asparagine glycan is linked to N81. The C-type lectin domain occupies 93 to 223 (FADSCYWIET…CTYLLYSICE (131 aa)). 2 disulfide bridges follow: C114–C222 and C193–C214. An N-linked (GlcNAc...) asparagine glycan is attached at N225.

This is C-type lectin domain-containing protein 87 from Caenorhabditis briggsae.